We begin with the raw amino-acid sequence, 166 residues long: Endoribonuclease YbeY (166 aa).

Residues H131, H135, and H141 each coordinate Zn(2+).

This sequence belongs to the endoribonuclease YbeY family. It depends on Zn(2+) as a cofactor.

The protein localises to the cytoplasm. Its function is as follows. Single strand-specific metallo-endoribonuclease involved in late-stage 70S ribosome quality control and in maturation of the 3' terminus of the 16S rRNA. In Dehalococcoides mccartyi (strain CBDB1), this protein is Endoribonuclease YbeY.